The chain runs to 135 residues: Nucleoside diphosphate kinase (135 aa).

Lys-10, Phe-58, Arg-86, Thr-92, Arg-103, and Asn-113 together coordinate ATP. His-116 acts as the Pros-phosphohistidine intermediate in catalysis.

This sequence belongs to the NDK family. As to quaternary structure, homotetramer. Mg(2+) serves as cofactor.

The protein localises to the cytoplasm. The catalysed reaction is a 2'-deoxyribonucleoside 5'-diphosphate + ATP = a 2'-deoxyribonucleoside 5'-triphosphate + ADP. The enzyme catalyses a ribonucleoside 5'-diphosphate + ATP = a ribonucleoside 5'-triphosphate + ADP. In terms of biological role, major role in the synthesis of nucleoside triphosphates other than ATP. The ATP gamma phosphate is transferred to the NDP beta phosphate via a ping-pong mechanism, using a phosphorylated active-site intermediate. The chain is Nucleoside diphosphate kinase from Nocardioides sp. (strain ATCC BAA-499 / JS614).